Consider the following 439-residue polypeptide: Proline--tRNA ligase (439 aa).

It belongs to the class-II aminoacyl-tRNA synthetase family. ProS type 2 subfamily. As to quaternary structure, homodimer.

The protein resides in the cytoplasm. The enzyme catalyses tRNA(Pro) + L-proline + ATP = L-prolyl-tRNA(Pro) + AMP + diphosphate. Catalyzes the attachment of proline to tRNA(Pro) in a two-step reaction: proline is first activated by ATP to form Pro-AMP and then transferred to the acceptor end of tRNA(Pro). This Hyphomonas neptunium (strain ATCC 15444) protein is Proline--tRNA ligase.